The sequence spans 130 residues: Small ribosomal subunit protein uS8 (130 aa).

The protein belongs to the universal ribosomal protein uS8 family. As to quaternary structure, part of the 30S ribosomal subunit. Contacts proteins S5 and S12.

Its function is as follows. One of the primary rRNA binding proteins, it binds directly to 16S rRNA central domain where it helps coordinate assembly of the platform of the 30S subunit. This is Small ribosomal subunit protein uS8 from Marinomonas sp. (strain MWYL1).